The following is a 194-amino-acid chain: Recombination protein RecR (194 aa).

The C4-type zinc finger occupies 53-68 (CEICFNLDVTSPCSIC). The 96-residue stretch at 76-171 (SLLCIVEELG…KVTRLACGIP (96 aa)) folds into the Toprim domain.

Belongs to the RecR family.

May play a role in DNA repair. It seems to be involved in an RecBC-independent recombinational process of DNA repair. It may act with RecF and RecO. The chain is Recombination protein RecR from Anaplasma phagocytophilum (strain HZ).